Consider the following 395-residue polypeptide: Glutamate N-acetyltransferase (395 aa).

Residues T146, K169, T180, E263, N390, and T395 each coordinate substrate. T180 serves as the catalytic Nucleophile.

This sequence belongs to the ArgJ family. As to quaternary structure, heterotetramer of two alpha and two beta chains.

Its subcellular location is the cytoplasm. The enzyme catalyses N(2)-acetyl-L-ornithine + L-glutamate = N-acetyl-L-glutamate + L-ornithine. Its pathway is amino-acid biosynthesis; L-arginine biosynthesis; L-ornithine and N-acetyl-L-glutamate from L-glutamate and N(2)-acetyl-L-ornithine (cyclic): step 1/1. Functionally, catalyzes the transfer of the acetyl group from N(2)-acetylornithine to glutamate, forming N-acetylglutamate and L-ornithine. The protein is Glutamate N-acetyltransferase of Methanosarcina acetivorans (strain ATCC 35395 / DSM 2834 / JCM 12185 / C2A).